The primary structure comprises 212 residues: Thymidylate kinase (212 aa).

N-acetylalanine is present on A2. ATP is bound by residues 16–21 (RAGKST) and R97. Residues 133–157 (LQLQLADAAKRGAFGHERYENGAFQ) are LID. K169 is modified (N6-acetyllysine). Positions 182 and 192 each coordinate ATP.

Belongs to the thymidylate kinase family. In terms of assembly, homodimer. Requires Mg(2+) as cofactor.

The catalysed reaction is dTMP + ATP = dTDP + ADP. Its pathway is pyrimidine metabolism; dTTP biosynthesis. Catalyzes the phosphorylation of thymidine monophosphate (dTMP) to thymidine diphosphate (dTDP), the immediate precursor for the DNA building block dTTP, with ATP as the preferred phosphoryl donor in the presence of Mg(2+). This Homo sapiens (Human) protein is Thymidylate kinase (DTYMK).